We begin with the raw amino-acid sequence, 285 residues long: 2-hydroxy-6-oxononadienedioate/2-hydroxy-6-oxononatrienedioate hydrolase 1 (285 aa).

His-265 acts as the Proton acceptor in catalysis.

It belongs to the AB hydrolase superfamily. MhpC family. Homodimer.

It catalyses the reaction (2Z,4E)-2-hydroxy-6-oxonona-2,4-dienedioate + H2O = (2Z)-2-hydroxypenta-2,4-dienoate + succinate + H(+). It carries out the reaction (2Z,4E,7E)-2-hydroxy-6-oxonona-2,4,7-trienedioate + H2O = (2Z)-2-hydroxypenta-2,4-dienoate + fumarate + H(+). Its pathway is aromatic compound metabolism; 3-phenylpropanoate degradation. Its function is as follows. Catalyzes the cleavage of the C5-C6 bond of 2-hydroxy-6-oxononadienedioate and 2-hydroxy-6-oxononatrienedioate, a dienol ring fission product of the bacterial meta-cleavage pathway for degradation of phenylpropionic acid. In Pseudomonas putida (Arthrobacter siderocapsulatus), this protein is 2-hydroxy-6-oxononadienedioate/2-hydroxy-6-oxononatrienedioate hydrolase 1.